The sequence spans 281 residues: Shikimate dehydrogenase (NADP(+)) (281 aa).

Shikimate-binding positions include 15–17 (SKS) and Thr62. Catalysis depends on Lys66, which acts as the Proton acceptor. Shikimate is bound by residues Asn87 and Asp102. NADP(+)-binding positions include 127–131 (GAGGS), 151–156 (NRTPER), and Leu217. Position 219 (Tyr219) interacts with shikimate. Gly241 serves as a coordination point for NADP(+).

The protein belongs to the shikimate dehydrogenase family. In terms of assembly, homodimer.

It catalyses the reaction shikimate + NADP(+) = 3-dehydroshikimate + NADPH + H(+). Its pathway is metabolic intermediate biosynthesis; chorismate biosynthesis; chorismate from D-erythrose 4-phosphate and phosphoenolpyruvate: step 4/7. Its function is as follows. Involved in the biosynthesis of the chorismate, which leads to the biosynthesis of aromatic amino acids. Catalyzes the reversible NADPH linked reduction of 3-dehydroshikimate (DHSA) to yield shikimate (SA). This is Shikimate dehydrogenase (NADP(+)) from Stenotrophomonas maltophilia (strain K279a).